The sequence spans 583 residues: Putative fatty-acid--CoA ligase fadD25 (583 aa).

Helical transmembrane passes span 77–97 (YVVS…LSIP), 109–129 (VFAD…DNVV), and 229–249 (FVLG…TSPI). The segment at 353 to 375 (IVQFDPQKLPDGQAERTESDGGT) is disordered.

Belongs to the ATP-dependent AMP-binding enzyme family.

It is found in the cell membrane. The sequence is that of Putative fatty-acid--CoA ligase fadD25 (fadD25) from Mycobacterium tuberculosis (strain CDC 1551 / Oshkosh).